The following is a 308-amino-acid chain: Putative transposon Ty5-1 protein YCL074W (308 aa).

The sequence is that of Putative transposon Ty5-1 protein YCL074W (TY5A) from Saccharomyces cerevisiae (strain ATCC 204508 / S288c) (Baker's yeast).